The sequence spans 148 residues: Small ribosomal subunit protein bS16 (148 aa).

Residues 111–122 show a composition bias toward low complexity; the sequence is AAAGEEPVAEAT. The interval 111 to 148 is disordered; the sequence is AAAGEEPVAEATTPKKKGGKKAEAEDKAEEQKSEEGQA. Positions 130–148 are enriched in basic and acidic residues; sequence KKAEAEDKAEEQKSEEGQA.

The protein belongs to the bacterial ribosomal protein bS16 family.

This is Small ribosomal subunit protein bS16 from Saccharopolyspora erythraea (strain ATCC 11635 / DSM 40517 / JCM 4748 / NBRC 13426 / NCIMB 8594 / NRRL 2338).